The sequence spans 237 residues: Cysteine-rich venom protein tigrin (237 aa).

An N-terminal signal peptide occupies residues 1 to 18 (MIVFILLSLAAVLRQSFG). The region spanning 37–165 (VNIHNSFRRS…LYNYFYVCQY (129 aa)) is the SCP domain. 8 cysteine pairs are disulfide-bonded: Cys74/Cys152, Cys91/Cys166, Cys147/Cys163, Cys185/Cys192, Cys188/Cys197, Cys201/Cys232, Cys210/Cys226, and Cys217/Cys230. The 32-residue stretch at 201-232 (CTHKDDYNNCNSLVSDCQSDWDKSHCPATCFC) folds into the ShKT domain.

This sequence belongs to the CRISP family. As to expression, expressed by the venom gland.

The protein resides in the secreted. In terms of biological role, this protein does not inhibit smooth muscle contraction elicited by high potassium levels or caffeine. The protein is Cysteine-rich venom protein tigrin of Rhabdophis tigrinus tigrinus (Tiger keelback snake).